Reading from the N-terminus, the 495-residue chain is PXA domain protein 1 (495 aa).

The 174-residue stretch at 1–174 (MAKLSSLLNP…KFIIYLSKAI (174 aa)) folds into the PXA domain. Transmembrane regions (helical) follow at residues 7 to 27 (LLNPIISKILEIYVYSWYSGI) and 235 to 255 (WFFFYTLLYPWIALVSAFVAE). Polar residues-rich tracts occupy residues 402–419 (AVSSPTKANTNKSHQRSF) and 427–436 (DSQTPSENSA). A disordered region spans residues 402-436 (AVSSPTKANTNKSHQRSFSIPKATKDSQTPSENSA). A helical membrane pass occupies residues 446-466 (AYSQIPVIPFFLPSDKLIMLV).

The protein resides in the endosome membrane. Required for required for normal vacuolar morphology and for vacuolar protein transport. Also required for endosome-to-Golgi protein transport. In Schizosaccharomyces pombe (strain 972 / ATCC 24843) (Fission yeast), this protein is PXA domain protein 1 (pxa1).